The following is a 118-amino-acid chain: Beta-2-microglobulin (118 aa).

The first 20 residues, 1 to 20 (MARFVVLVLLGLLYLSHLDA), serve as a signal peptide directing secretion. In terms of domain architecture, Ig-like C1-type spans 25–113 (PKVQVYSRHP…TTLSEPKVVK (89 aa)). Cys45 and Cys99 form a disulfide bridge.

The protein belongs to the beta-2-microglobulin family. As to quaternary structure, heterodimer of an alpha chain and a beta chain. Beta-2-microglobulin is the beta-chain of major histocompatibility complex class I molecules.

It is found in the secreted. Component of the class I major histocompatibility complex (MHC). Involved in the presentation of peptide antigens to the immune system. This chain is Beta-2-microglobulin (B2M), found in Felis catus (Cat).